Reading from the N-terminus, the 505-residue chain is Lysine--tRNA ligase (505 aa).

Glu403 and Glu410 together coordinate Mg(2+).

The protein belongs to the class-II aminoacyl-tRNA synthetase family. As to quaternary structure, homodimer. The cofactor is Mg(2+).

It is found in the cytoplasm. The catalysed reaction is tRNA(Lys) + L-lysine + ATP = L-lysyl-tRNA(Lys) + AMP + diphosphate. The sequence is that of Lysine--tRNA ligase from Methanospirillum hungatei JF-1 (strain ATCC 27890 / DSM 864 / NBRC 100397 / JF-1).